The sequence spans 635 residues: Threonine--tRNA ligase (635 aa).

The 61-residue stretch at 1-61 (MVSIRLPDGS…DRDASLAIVT (61 aa)) folds into the TGS domain. The catalytic stretch occupies residues 242–533 (DHRKLGKQLD…LIEHHAGAMP (292 aa)). 3 residues coordinate Zn(2+): Cys333, His384, and His510.

It belongs to the class-II aminoacyl-tRNA synthetase family. Homodimer. Requires Zn(2+) as cofactor.

Its subcellular location is the cytoplasm. It carries out the reaction tRNA(Thr) + L-threonine + ATP = L-threonyl-tRNA(Thr) + AMP + diphosphate + H(+). Its function is as follows. Catalyzes the attachment of threonine to tRNA(Thr) in a two-step reaction: L-threonine is first activated by ATP to form Thr-AMP and then transferred to the acceptor end of tRNA(Thr). Also edits incorrectly charged L-seryl-tRNA(Thr). The protein is Threonine--tRNA ligase of Burkholderia pseudomallei (strain 1106a).